The sequence spans 987 residues: Eukaryotic translation initiation factor 3 subunit A (987 aa).

The stretch at 93 to 122 (LHLATDKAEQARSQADALEEALDVDDLEAD) forms a coiled coil. One can recognise a PCI domain in the interval 316–513 (LQLIASSVVL…GVVIFGNLGI (198 aa)). Coiled coils occupy residues 556-742 (TVEK…EKNR) and 797-858 (LKIE…REEL). The segment covering 808 to 859 (QEEEEARKQEEAERLKKVEAERKANLDKAFEKQRQREIELEEKSRREREELL) has biased composition (basic and acidic residues). The tract at residues 808–987 (QEEEEARKQE…GSSRPRPTQR (180 aa)) is disordered. Residues 872 to 894 (PTVTPVGTTAPAAAAAAAGAPAA) show a composition bias toward low complexity. Composition is skewed to polar residues over residues 905–916 (TEVSGPSAPTSS) and 976–987 (TFGSSRPRPTQR).

It belongs to the eIF-3 subunit A family. Component of the eukaryotic translation initiation factor 3 (eIF-3) complex. Binds to the translation initiation factor TIF3H1.

It localises to the cytoplasm. Its function is as follows. RNA-binding component of the eukaryotic translation initiation factor 3 (eIF-3) complex, which is involved in protein synthesis of a specialized repertoire of mRNAs and, together with other initiation factors, stimulates binding of mRNA and methionyl-tRNAi to the 40S ribosome. The eIF-3 complex specifically targets and initiates translation of a subset of mRNAs involved in cell proliferation. This chain is Eukaryotic translation initiation factor 3 subunit A (TIF3A1), found in Arabidopsis thaliana (Mouse-ear cress).